The primary structure comprises 191 residues: Peptidyl-tRNA hydrolase (191 aa).

Y14 contributes to the tRNA binding site. H19 acts as the Proton acceptor in catalysis. 3 residues coordinate tRNA: Y64, N66, and N112.

Belongs to the PTH family. In terms of assembly, monomer.

The protein resides in the cytoplasm. The catalysed reaction is an N-acyl-L-alpha-aminoacyl-tRNA + H2O = an N-acyl-L-amino acid + a tRNA + H(+). Its function is as follows. Hydrolyzes ribosome-free peptidyl-tRNAs (with 1 or more amino acids incorporated), which drop off the ribosome during protein synthesis, or as a result of ribosome stalling. Catalyzes the release of premature peptidyl moieties from peptidyl-tRNA molecules trapped in stalled 50S ribosomal subunits, and thus maintains levels of free tRNAs and 50S ribosomes. The polypeptide is Peptidyl-tRNA hydrolase (Clostridium botulinum (strain Alaska E43 / Type E3)).